The chain runs to 145 residues: Putative antiporter subunit mnhG2 (145 aa).

Helical transmembrane passes span 11–31 (IAAV…IGIV), 51–71 (VLLT…FFSV), and 72–92 (RLLL…HLVA).

It belongs to the CPA3 antiporters (TC 2.A.63) subunit G family. As to quaternary structure, may form a heterooligomeric complex that consists of seven subunits: mnhA2, mnhB2, mnhC2, mnhD2, mnhE2, mnhF2 and mnhG2.

The protein localises to the cell membrane. This Staphylococcus aureus (strain MRSA252) protein is Putative antiporter subunit mnhG2 (mnhG2).